A 366-amino-acid polypeptide reads, in one-letter code: UDP-N-acetylglucosamine--N-acetylmuramyl-(pentapeptide) pyrophosphoryl-undecaprenol N-acetylglucosamine transferase (366 aa).

Residues 14–16 (TGG), asparagine 125, arginine 168, serine 196, and glutamine 297 each bind UDP-N-acetyl-alpha-D-glucosamine.

It belongs to the glycosyltransferase 28 family. MurG subfamily.

The protein resides in the cell inner membrane. The enzyme catalyses di-trans,octa-cis-undecaprenyl diphospho-N-acetyl-alpha-D-muramoyl-L-alanyl-D-glutamyl-meso-2,6-diaminopimeloyl-D-alanyl-D-alanine + UDP-N-acetyl-alpha-D-glucosamine = di-trans,octa-cis-undecaprenyl diphospho-[N-acetyl-alpha-D-glucosaminyl-(1-&gt;4)]-N-acetyl-alpha-D-muramoyl-L-alanyl-D-glutamyl-meso-2,6-diaminopimeloyl-D-alanyl-D-alanine + UDP + H(+). The protein operates within cell wall biogenesis; peptidoglycan biosynthesis. Its function is as follows. Cell wall formation. Catalyzes the transfer of a GlcNAc subunit on undecaprenyl-pyrophosphoryl-MurNAc-pentapeptide (lipid intermediate I) to form undecaprenyl-pyrophosphoryl-MurNAc-(pentapeptide)GlcNAc (lipid intermediate II). This Rhodopseudomonas palustris (strain ATCC BAA-98 / CGA009) protein is UDP-N-acetylglucosamine--N-acetylmuramyl-(pentapeptide) pyrophosphoryl-undecaprenol N-acetylglucosamine transferase.